Here is a 447-residue protein sequence, read N- to C-terminus: Trigger factor (447 aa).

The 86-residue stretch at 188 to 273 (GDKLVIDFEG…VNDIQVAEDF (86 aa)) folds into the PPIase FKBP-type domain.

It belongs to the FKBP-type PPIase family. Tig subfamily.

Its subcellular location is the cytoplasm. The enzyme catalyses [protein]-peptidylproline (omega=180) = [protein]-peptidylproline (omega=0). Its function is as follows. Involved in protein export. Acts as a chaperone by maintaining the newly synthesized protein in an open conformation. Functions as a peptidyl-prolyl cis-trans isomerase. This Wolbachia sp. subsp. Brugia malayi (strain TRS) protein is Trigger factor.